Here is a 92-residue protein sequence, read N- to C-terminus: Small ribosomal subunit protein uS19c (92 aa).

The protein belongs to the universal ribosomal protein uS19 family.

The protein resides in the plastid. It is found in the chloroplast. Functionally, protein S19 forms a complex with S13 that binds strongly to the 16S ribosomal RNA. The chain is Small ribosomal subunit protein uS19c (rps19) from Picea abies (Norway spruce).